The sequence spans 658 residues: UvrABC system protein B (658 aa).

The Helicase ATP-binding domain occupies 26–413 (EGINSGKKKQ…SPEVIEQIIR (388 aa)). 39 to 46 (GATGTGKT) serves as a coordination point for ATP. Residues 92–115 (YYDYYQPEAYVPQTDTFIEKDAQI) carry the Beta-hairpin motif. One can recognise a Helicase C-terminal domain in the interval 430 to 596 (QIDDLLGEIQ…TIQKGVRDVI (167 aa)). In terms of domain architecture, UVR spans 622 to 657 (EKTIAKMEAEMKEAAKALDFERAAELRDLLLELKAE).

It belongs to the UvrB family. As to quaternary structure, forms a heterotetramer with UvrA during the search for lesions. Interacts with UvrC in an incision complex.

The protein localises to the cytoplasm. The UvrABC repair system catalyzes the recognition and processing of DNA lesions. A damage recognition complex composed of 2 UvrA and 2 UvrB subunits scans DNA for abnormalities. Upon binding of the UvrA(2)B(2) complex to a putative damaged site, the DNA wraps around one UvrB monomer. DNA wrap is dependent on ATP binding by UvrB and probably causes local melting of the DNA helix, facilitating insertion of UvrB beta-hairpin between the DNA strands. Then UvrB probes one DNA strand for the presence of a lesion. If a lesion is found the UvrA subunits dissociate and the UvrB-DNA preincision complex is formed. This complex is subsequently bound by UvrC and the second UvrB is released. If no lesion is found, the DNA wraps around the other UvrB subunit that will check the other stand for damage. This chain is UvrABC system protein B, found in Bacillus anthracis.